A 282-amino-acid chain; its full sequence is DegV domain-containing protein SPy_0865/M5005_Spy0672 (282 aa).

The DegV domain maps to 3 to 280; that stretch reads LAVITDSTAT…EGAIAFGVTP (278 aa). Hexadecanoate is bound by residues threonine 61 and serine 94.

May bind long-chain fatty acids, such as palmitate, and may play a role in lipid transport or fatty acid metabolism. In Streptococcus pyogenes serotype M1, this protein is DegV domain-containing protein SPy_0865/M5005_Spy0672.